Consider the following 201-residue polypeptide: Recombination protein RecR (201 aa).

A C4-type zinc finger spans residues 60 to 75 (CSCCGNVDTSDPCTIC). Residues 83–178 (TTLIVVEDVS…RVTRLAHGVP (96 aa)) form the Toprim domain.

Belongs to the RecR family.

In terms of biological role, may play a role in DNA repair. It seems to be involved in an RecBC-independent recombinational process of DNA repair. It may act with RecF and RecO. The protein is Recombination protein RecR of Brucella anthropi (strain ATCC 49188 / DSM 6882 / CCUG 24695 / JCM 21032 / LMG 3331 / NBRC 15819 / NCTC 12168 / Alc 37) (Ochrobactrum anthropi).